Here is a 128-residue protein sequence, read N- to C-terminus: Small ribosomal subunit protein uS9 (128 aa).

This sequence belongs to the universal ribosomal protein uS9 family.

In Amoebophilus asiaticus (strain 5a2), this protein is Small ribosomal subunit protein uS9.